Here is a 438-residue protein sequence, read N- to C-terminus: Enolase (438 aa).

Substrate contacts are provided by His-159 and Glu-168. Residue Glu-211 is the Proton donor of the active site. Mg(2+)-binding residues include Asp-246, Glu-297, and Asp-322. Residues Glu-297 and Asp-322 each coordinate substrate. The Proton acceptor role is filled by Lys-347. Residues 374–377 (SHRS) and Lys-398 contribute to the substrate site.

Belongs to the enolase family. In terms of assembly, homodimer. The cofactor is Mg(2+).

The protein resides in the cytoplasm. The enzyme catalyses (2R)-2-phosphoglycerate = phosphoenolpyruvate + H2O. The protein operates within carbohydrate degradation; glycolysis; pyruvate from D-glyceraldehyde 3-phosphate: step 4/5. This chain is Enolase (emp-7), found in Neurospora crassa (strain ATCC 24698 / 74-OR23-1A / CBS 708.71 / DSM 1257 / FGSC 987).